Consider the following 64-residue polypeptide: Crotamine CRO3 (64 aa).

The signal sequence occupies residues 1–22; sequence MILYLLFAFLFLAFLSEPGNAY. Intrachain disulfides connect C25–C57, C32–C51, and C39–C58.

This sequence belongs to the crotamine-myotoxin family. Monomer. As to expression, expressed by the venom gland.

Its subcellular location is the secreted. Its function is as follows. Cationic peptide that possesses multiple functions. It acts as a cell-penetrating peptide (CPP), and as a potent voltage-gated potassium channel (Kv) inhibitor. It exhibits antimicrobial activities, hind limb paralysis, and severe muscle necrosis by a non-enzymatic mechanism. The protein is Crotamine CRO3 (CRO3) of Crotalus durissus terrificus (South American rattlesnake).